The chain runs to 176 residues: Late lactation protein A (176 aa).

Residues 1-18 (MRVLFLTISLSLFSIIHA) form the signal peptide. A disulfide bridge links cysteine 78 with cysteine 171.

This sequence belongs to the calycin superfamily. Lipocalin family. In terms of tissue distribution, mammary gland specific. Secreted in milk.

It localises to the secreted. Functionally, probably serves a role in the transport of a small ligand released during the hydrolysis of milk fat. The polypeptide is Late lactation protein A (LLPA) (Notamacropus eugenii (Tammar wallaby)).